Consider the following 585-residue polypeptide: Glycerol-3-phosphate dehydrogenase 2 (585 aa).

An FAD-binding site is contributed by 37–65; the sequence is DVVVIGGGVVGSGCALDAATRGLKVALVE.

It belongs to the FAD-dependent glycerol-3-phosphate dehydrogenase family. It depends on FAD as a cofactor.

The protein resides in the cytoplasm. The catalysed reaction is a quinone + sn-glycerol 3-phosphate = dihydroxyacetone phosphate + a quinol. This is Glycerol-3-phosphate dehydrogenase 2 (glpD2) from Mycobacterium bovis (strain ATCC BAA-935 / AF2122/97).